We begin with the raw amino-acid sequence, 361 residues long: Cyclin-Y-like protein 2 (361 aa).

The region spanning 204-286 (MRLTAEFAIV…QFLKLINYNN (83 aa)) is the Cyclin N-terminal domain.

The protein belongs to the cyclin family. Cyclin Y subfamily.

This Homo sapiens (Human) protein is Cyclin-Y-like protein 2 (CCNYL2).